The chain runs to 537 residues: Glutamyl-tRNA reductase, chloroplastic (537 aa).

The N-terminal 48 residues, 1 to 48 (MMASTTSATAAGGAFAAAKTRAGSSAAGGGACARVAAGGRRRSGVVVR), are a transit peptide targeting the chloroplast. Residues 134–137 (TCNR), Ser-194, 199–201 (EGQ), and Gln-205 each bind substrate. Cys-135 functions as the Nucleophile in the catalytic mechanism. 276–281 (GAGKMG) is a binding site for NADP(+).

It belongs to the glutamyl-tRNA reductase family.

Its subcellular location is the plastid. The protein resides in the chloroplast. It carries out the reaction (S)-4-amino-5-oxopentanoate + tRNA(Glu) + NADP(+) = L-glutamyl-tRNA(Glu) + NADPH + H(+). The protein operates within porphyrin-containing compound metabolism; protoporphyrin-IX biosynthesis; 5-aminolevulinate from L-glutamyl-tRNA(Glu): step 1/2. In terms of biological role, catalyzes the NADPH-dependent reduction of glutamyl-tRNA(Glu) to glutamate 1-semialdehyde (GSA). The polypeptide is Glutamyl-tRNA reductase, chloroplastic (Oryza sativa subsp. japonica (Rice)).